Reading from the N-terminus, the 867-residue chain is DNA mismatch repair protein MutS (867 aa).

606–613 (GPNMSGKS) provides a ligand contact to ATP.

It belongs to the DNA mismatch repair MutS family.

In terms of biological role, this protein is involved in the repair of mismatches in DNA. It is possible that it carries out the mismatch recognition step. This protein has a weak ATPase activity. This chain is DNA mismatch repair protein MutS, found in Oceanobacillus iheyensis (strain DSM 14371 / CIP 107618 / JCM 11309 / KCTC 3954 / HTE831).